The following is a 387-amino-acid chain: Phosphoglycerate kinase (387 aa).

Substrate contacts are provided by residues 21–23 (DLN), R36, 59–62 (HLGR), R113, and R146. ATP-binding positions include K197, E314, and 340–343 (GGDT).

The protein belongs to the phosphoglycerate kinase family. Monomer.

It is found in the cytoplasm. The enzyme catalyses (2R)-3-phosphoglycerate + ATP = (2R)-3-phospho-glyceroyl phosphate + ADP. The protein operates within carbohydrate degradation; glycolysis; pyruvate from D-glyceraldehyde 3-phosphate: step 2/5. The protein is Phosphoglycerate kinase of Pseudomonas putida (strain W619).